The sequence spans 399 residues: Elongation factor Tu (399 aa).

The 200-residue stretch at 10–209 (KPHVNIGTIG…DVDEYIPTPV (200 aa)) folds into the tr-type G domain. Residues 19–26 (GHVDHGKT) are G1. Residue 19-26 (GHVDHGKT) participates in GTP binding. Threonine 26 contributes to the Mg(2+) binding site. The G2 stretch occupies residues 62 to 66 (GITIN). The G3 stretch occupies residues 83 to 86 (DCPG). GTP is bound by residues 83 to 87 (DCPGH) and 138 to 141 (NKCD). Residues 138-141 (NKCD) form a G4 region. The tract at residues 175–177 (SAY) is G5.

This sequence belongs to the TRAFAC class translation factor GTPase superfamily. Classic translation factor GTPase family. EF-Tu/EF-1A subfamily. As to quaternary structure, monomer.

The protein resides in the cytoplasm. It carries out the reaction GTP + H2O = GDP + phosphate + H(+). Its function is as follows. GTP hydrolase that promotes the GTP-dependent binding of aminoacyl-tRNA to the A-site of ribosomes during protein biosynthesis. This chain is Elongation factor Tu, found in Bifidobacterium animalis subsp. lactis (strain AD011).